We begin with the raw amino-acid sequence, 202 residues long: Uclacyanin-2 (202 aa).

The first 29 residues, 1-29 (MAMNGLSKMAVAAATALLLVLTIVPGAVA), serve as a signal peptide directing secretion. Positions 30 to 126 (VTYTIEWTTG…GMKLAVNVVA (97 aa)) constitute a Phytocyanin domain. Histidine 65 contributes to the Cu cation binding site. N-linked (GlcNAc...) asparagine glycosylation occurs at asparagine 86. Cysteine 106, histidine 111, and methionine 118 together coordinate Cu cation. Residues 129–181 (AGPPATPTPPSSTPGTPTTPESPPSGGSPTPTTPTPGAGSTSPPPPPKASGAS) are disordered. Positions 141–169 (TPGTPTTPESPPSGGSPTPTTPTPGAGST) are enriched in low complexity. A lipid anchor (GPI-anchor amidated serine) is attached at serine 178. A propeptide spans 179–202 (GASKGVMSYVLVGVSMVLGYGLWM) (removed in mature form).

Its subcellular location is the cell membrane. Probably acts as an electron carrier involved in oxygen activation and/or lignin formation. This is Uclacyanin-2 from Arabidopsis thaliana (Mouse-ear cress).